We begin with the raw amino-acid sequence, 486 residues long: Katanin p60 ATPase-containing subunit A1 (486 aa).

A disordered region spans residues 103–174 (RSSPLPVRRP…NKAEVSEKEV (72 aa)). Residues 143–174 (NGDRAKPLKGKEKKEAKPKDDKNKAEVSEKEV) are compositionally biased toward basic and acidic residues. 244–251 (GPPGTGKT) is an ATP binding site.

This sequence belongs to the AAA ATPase family. Katanin p60 subunit A1 subfamily. Can homooligomerize into hexameric rings, which may be promoted by interaction with microtubules. Interacts with katnb1, which may serve as a targeting subunit.

The protein localises to the cytoplasm. It localises to the cytoskeleton. Its subcellular location is the microtubule organizing center. It is found in the centrosome. The protein resides in the spindle pole. The protein localises to the spindle. The enzyme catalyses n ATP + n H2O + a microtubule = n ADP + n phosphate + (n+1) alpha/beta tubulin heterodimers.. ATPase activity is stimulated by microtubules, which promote homooligomerization. ATP-dependent microtubule severing is stimulated by interaction with katnb1. In terms of biological role, catalytic subunit of a complex which severs microtubules in an ATP-dependent manner. Microtubule severing may promote rapid reorganization of cellular microtubule arrays and the release of microtubules from the centrosome following nucleation. The protein is Katanin p60 ATPase-containing subunit A1 (katna1) of Salmo salar (Atlantic salmon).